Reading from the N-terminus, the 941-residue chain is Isoleucine--tRNA ligase (941 aa).

Positions 58–68 (PYANGDIHIGH) match the 'HIGH' region motif. Residue glutamate 563 coordinates L-isoleucyl-5'-AMP. The 'KMSKS' region motif lies at 604 to 608 (KMSKS). Lysine 607 serves as a coordination point for ATP. Residues cysteine 904, cysteine 907, cysteine 924, and cysteine 927 each coordinate Zn(2+).

It belongs to the class-I aminoacyl-tRNA synthetase family. IleS type 1 subfamily. In terms of assembly, monomer. The cofactor is Zn(2+).

The protein resides in the cytoplasm. The enzyme catalyses tRNA(Ile) + L-isoleucine + ATP = L-isoleucyl-tRNA(Ile) + AMP + diphosphate. Functionally, catalyzes the attachment of isoleucine to tRNA(Ile). As IleRS can inadvertently accommodate and process structurally similar amino acids such as valine, to avoid such errors it has two additional distinct tRNA(Ile)-dependent editing activities. One activity is designated as 'pretransfer' editing and involves the hydrolysis of activated Val-AMP. The other activity is designated 'posttransfer' editing and involves deacylation of mischarged Val-tRNA(Ile). The polypeptide is Isoleucine--tRNA ligase (Halorhodospira halophila (strain DSM 244 / SL1) (Ectothiorhodospira halophila (strain DSM 244 / SL1))).